The chain runs to 563 residues: Arginine--tRNA ligase (563 aa).

Residues 121–131 carry the 'HIGH' region motif; sequence PNIAKPFSIGH.

It belongs to the class-I aminoacyl-tRNA synthetase family. In terms of assembly, monomer.

The protein localises to the cytoplasm. The catalysed reaction is tRNA(Arg) + L-arginine + ATP = L-arginyl-tRNA(Arg) + AMP + diphosphate. This chain is Arginine--tRNA ligase, found in Streptococcus pneumoniae serotype 19F (strain G54).